A 629-amino-acid chain; its full sequence is Endoglucanase 15 (629 aa).

Positions 1–30 (MAKNGGAHGAATLFGLLALASMVKLGFVAG) are cleaved as a signal peptide. Aspartate 87 serves as the catalytic Nucleophile. Residues histidine 421, aspartate 473, and glutamate 482 contribute to the active site. N-linked (GlcNAc...) asparagine glycosylation is found at asparagine 520, asparagine 540, and asparagine 561.

The protein belongs to the glycosyl hydrolase 9 (cellulase E) family.

The protein localises to the secreted. The catalysed reaction is Endohydrolysis of (1-&gt;4)-beta-D-glucosidic linkages in cellulose, lichenin and cereal beta-D-glucans.. This is Endoglucanase 15 from Oryza sativa subsp. japonica (Rice).